The sequence spans 313 residues: Iron-sulfur protein required for NADH dehydrogenase, mitochondrial (313 aa).

The transit peptide at 1–22 directs the protein to the mitochondrion; the sequence is MATVALLRSLRRRELHAAHISA. 51 to 58 contacts ATP; the sequence is GKGGVGKS.

This sequence belongs to the Mrp/NBP35 ATP-binding proteins family. Requires [4Fe-4S] cluster as cofactor.

It localises to the mitochondrion matrix. In terms of biological role, essential during early vegetative growth. Required for the assembly of the mitochondrial membrane respiratory chain NADH dehydrogenase (Complex I). Involved in mitochondrial translation activity. May deliver of one or more Fe-S clusters to complex I subunits. The protein is Iron-sulfur protein required for NADH dehydrogenase, mitochondrial of Arabidopsis thaliana (Mouse-ear cress).